A 299-amino-acid chain; its full sequence is Regucalcin (299 aa).

E18 contacts a divalent metal cation. Substrate contacts are provided by R101, N103, and E121. K144 is subject to N6-succinyllysine. Residues N154 and D204 each contribute to the a divalent metal cation site. The active-site Proton donor/acceptor is the D204. N6-succinyllysine is present on residues K244 and K253.

Belongs to the SMP-30/CGR1 family. Monomer. Zn(2+) is required as a cofactor. Requires Mn(2+) as cofactor. The cofactor is Ca(2+). It depends on Mg(2+) as a cofactor. In terms of tissue distribution, mainly present in the liver. Weak expression was found in the brain, lung and kidney.

Its subcellular location is the cytoplasm. The catalysed reaction is D-glucono-1,5-lactone + H2O = D-gluconate + H(+). It functions in the pathway cofactor biosynthesis; L-ascorbate biosynthesis via UDP-alpha-D-glucuronate pathway; L-ascorbate from UDP-alpha-D-glucuronate: step 3/4. Gluconolactonase with low activity towards other sugar lactones, including gulonolactone and galactonolactone. Catalyzes a key step in ascorbic acid (vitamin C) biosynthesis. Can also hydrolyze diisopropyl phosphorofluoridate and phenylacetate (in vitro). Calcium-binding protein. Modulates Ca(2+) signaling, and Ca(2+)-dependent cellular processes and enzyme activities. This chain is Regucalcin (Rgn), found in Mus musculus (Mouse).